Consider the following 167-residue polypeptide: Respiratory supercomplex factor 1-A, mitochondrial (167 aa).

One can recognise an HIG1 domain in the interval 1–86 (MCSDFEEETS…TERKQRREFE (86 aa)). Helical transmembrane passes span 21–38 (EPLI…LYRA) and 53–75 (MFRA…GMYY). Residues 75 to 107 (YKTERKQRREFEKKVEERKAQEKRDAWLRELEA) are a coiled coil.

The protein belongs to the RCF1 family. In terms of assembly, associates with the respiratory chain complex III/complex IV supercomplex.

It is found in the mitochondrion membrane. In terms of biological role, cytochrome c oxidase subunit which plays a role in assembly of respiratory supercomplexes. The polypeptide is Respiratory supercomplex factor 1-A, mitochondrial (rcf1-A) (Talaromyces marneffei (strain ATCC 18224 / CBS 334.59 / QM 7333) (Penicillium marneffei)).